The primary structure comprises 568 residues: Urease subunit beta (568 aa).

The 438-residue stretch at 131-568 (GGIDTHIHFI…LSLAQLYNLF (438 aa)) folds into the Urease domain. Ni(2+) is bound by residues His-136, His-138, and Lys-219. Lys-219 carries the post-translational modification N6-carboxylysine. His-221 serves as a coordination point for substrate. 2 residues coordinate Ni(2+): His-248 and His-274. Residue His-321 is the Proton donor of the active site. Asp-361 contributes to the Ni(2+) binding site.

Belongs to the metallo-dependent hydrolases superfamily. Urease alpha subunit family. In terms of assembly, heterohexamer of 3 UreA (alpha) and 3 UreB (beta) subunits. Ni cation serves as cofactor. Carboxylation allows a single lysine to coordinate two nickel ions.

It localises to the cytoplasm. The enzyme catalyses urea + 2 H2O + H(+) = hydrogencarbonate + 2 NH4(+). Its pathway is nitrogen metabolism; urea degradation; CO(2) and NH(3) from urea (urease route): step 1/1. This is Urease subunit beta from Helicobacter heilmannii.